We begin with the raw amino-acid sequence, 246 residues long: Electron transfer flavoprotein beta subunit lysine methyltransferase (246 aa).

It belongs to the methyltransferase superfamily. ETFBKMT family.

The protein resides in the cytoplasm. Its subcellular location is the mitochondrion matrix. The enzyme catalyses L-lysyl-[protein] + 3 S-adenosyl-L-methionine = N(6),N(6),N(6)-trimethyl-L-lysyl-[protein] + 3 S-adenosyl-L-homocysteine + 3 H(+). In terms of biological role, protein-lysine methyltransferase that selectively trimethylates the flavoprotein ETFB in mitochondria. Thereby, may negatively regulate the function of ETFB in electron transfer from Acyl-CoA dehydrogenases to the main respiratory chain. This chain is Electron transfer flavoprotein beta subunit lysine methyltransferase (etfbkmt), found in Xenopus laevis (African clawed frog).